The sequence spans 197 residues: A-kinase anchor protein 14 (197 aa).

2 stretches are compositionally biased toward polar residues: residues Met1 to Lys11 and Ala19 to Asp29. Positions Met1–Asp29 are disordered. An RII-binding region spans residues Glu35–Val52.

As to quaternary structure, binds to type II regulatory subunits (RII). Present in cilia (at protein level). Expressed in tissues containing axoneme-based organelles (cilia and/or flagella): trachea and testis. Highly expressed in airway cilia.

Its subcellular location is the cytoplasm. Its function is as follows. Binds to type II regulatory subunits of protein kinase A and anchors/targets them. The protein is A-kinase anchor protein 14 (AKAP14) of Homo sapiens (Human).